The chain runs to 668 residues: Kinesin-like protein KIF2B (668 aa).

Thr125 bears the Phosphothreonine; by PLK1 mark. Residues 149–177 (CLREIEKLQKQREKRRRLQLEIRARRALD) adopt a coiled-coil conformation. A Phosphoserine; by PLK1 modification is found at Ser204. Positions 213-543 (RICVCVRKRP…LRYANRVKEL (331 aa)) constitute a Kinesin motor domain. 303–310 (GQTGSGKT) serves as a coordination point for ATP. The span at 585-604 (PTVEKEEEKESDELTSKKEP) shows a compositional bias: basic and acidic residues. The interval 585-605 (PTVEKEEEKESDELTSKKEPA) is disordered. Positions 646 to 667 (VLTDIQKKLQSLREDLQKKSQV) form a coiled coil.

This sequence belongs to the TRAFAC class myosin-kinesin ATPase superfamily. Kinesin family. MCAK/KIF2 subfamily. Phosphorylation at Thr-125 by PLK1 is required for activity in the correction of kinetochore-microtubules attachment errors, while phosphorylation at Ser-204 also by PLK1 is required for the kinetochore localization and activity in prometaphase.

It localises to the cytoplasm. The protein localises to the cytoskeleton. It is found in the microtubule organizing center. Its subcellular location is the centrosome. The protein resides in the spindle. It localises to the chromosome. The protein localises to the centromere. It is found in the kinetochore. In terms of biological role, plus end-directed microtubule-dependent motor required for spindle assembly and chromosome movement during mitosis. Has microtubule depolymerization activity. Plays a role in chromosome congression. This chain is Kinesin-like protein KIF2B (Kif2b), found in Mus musculus (Mouse).